The following is a 905-amino-acid chain: Probable aromatic-L-amino-acid decarboxylase (905 aa).

The tract at residues 250–296 is disordered; the sequence is YLNPIIKTPPHNERVPKMKTNISKTRKKKGKVSDASKDSRPSETKKE. Residues 280-296 show a composition bias toward basic and acidic residues; the sequence is KVSDASKDSRPSETKKE. 2 residues coordinate pyridoxal 5'-phosphate: T492 and S591. The residue at position 648 (K648) is an N6-(pyridoxal phosphate)lysine. The disordered stretch occupies residues 861 to 905; it reads HTAEYADPPGKSNKSPQVAAKGELPSAAPPSSRTPNSDISEKSDR. Over residues 889-898 the composition is skewed to polar residues; it reads PPSSRTPNSD.

Belongs to the group II decarboxylase family. Homodimer. The cofactor is pyridoxal 5'-phosphate.

The catalysed reaction is L-dopa + H(+) = dopamine + CO2. It carries out the reaction 5-hydroxy-L-tryptophan + H(+) = serotonin + CO2. It functions in the pathway catecholamine biosynthesis; dopamine biosynthesis; dopamine from L-tyrosine: step 2/2. Its function is as follows. Catalyzes the decarboxylation of L-3,4-dihydroxyphenylalanine (DOPA) to dopamine, L-5-hydroxytryptophan to serotonin and L-tryptophan to tryptamine. This chain is Probable aromatic-L-amino-acid decarboxylase (hdl-1), found in Caenorhabditis elegans.